We begin with the raw amino-acid sequence, 202 residues long: Holliday junction resolvase RecU (202 aa).

Mg(2+) is bound by residues Thr85, Asp87, Glu100, and Gln119.

This sequence belongs to the RecU family. Mg(2+) is required as a cofactor.

Its subcellular location is the cytoplasm. It carries out the reaction Endonucleolytic cleavage at a junction such as a reciprocal single-stranded crossover between two homologous DNA duplexes (Holliday junction).. Endonuclease that resolves Holliday junction intermediates in genetic recombination. Cleaves mobile four-strand junctions by introducing symmetrical nicks in paired strands. Promotes annealing of linear ssDNA with homologous dsDNA. Required for DNA repair, homologous recombination and chromosome segregation. This chain is Holliday junction resolvase RecU, found in Streptococcus equi subsp. equi (strain 4047).